A 255-amino-acid chain; its full sequence is Triosephosphate isomerase (255 aa).

10 to 12 (NWK) is a substrate binding site. The Electrophile role is filled by histidine 96. The active-site Proton acceptor is glutamate 169. Substrate-binding positions include glycine 175, serine 214, and 235-236 (GG).

The protein belongs to the triosephosphate isomerase family. In terms of assembly, homodimer.

It is found in the cytoplasm. It carries out the reaction D-glyceraldehyde 3-phosphate = dihydroxyacetone phosphate. It functions in the pathway carbohydrate biosynthesis; gluconeogenesis. It participates in carbohydrate degradation; glycolysis; D-glyceraldehyde 3-phosphate from glycerone phosphate: step 1/1. Functionally, involved in the gluconeogenesis. Catalyzes stereospecifically the conversion of dihydroxyacetone phosphate (DHAP) to D-glyceraldehyde-3-phosphate (G3P). The sequence is that of Triosephosphate isomerase from Coxiella burnetii (strain Dugway 5J108-111).